The primary structure comprises 126 residues: Large ribosomal subunit protein bL12 (126 aa).

The protein belongs to the bacterial ribosomal protein bL12 family. In terms of assembly, homodimer. Part of the ribosomal stalk of the 50S ribosomal subunit. Forms a multimeric L10(L12)X complex, where L10 forms an elongated spine to which 2 to 4 L12 dimers bind in a sequential fashion. Binds GTP-bound translation factors.

Functionally, forms part of the ribosomal stalk which helps the ribosome interact with GTP-bound translation factors. Is thus essential for accurate translation. The chain is Large ribosomal subunit protein bL12 from Streptococcus pyogenes serotype M28 (strain MGAS6180).